Here is a 973-residue protein sequence, read N- to C-terminus: Ras-related protein Rab-44 (973 aa).

Residues Met-1–Gln-21 show a composition bias toward basic residues. The disordered stretch occupies residues Met-1–Ser-42. One can recognise an EF-hand domain in the interval Gly-77–Ser-111. The disordered stretch occupies residues Ser-112–Glu-140. The span at Ser-123–Leu-135 shows a compositional bias: polar residues. The stretch at Leu-219–Glu-310 forms a coiled coil. 4 disordered regions span residues Arg-319–Asn-368, Phe-421–Leu-481, Gly-493–Val-708, and Glu-724–Gln-779. Pro residues predominate over residues Asp-428–Pro-440. Positions Lys-445 to Asp-457 are enriched in basic and acidic residues. Positions Gly-513–Ser-524 are enriched in low complexity. Basic and acidic residues-rich tracts occupy residues Ser-548–Lys-559, His-598–Gly-608, and Ser-654–Ser-663. Residues Glu-665–Pro-680 are compositionally biased toward polar residues. Positions Ala-750–Arg-766 are enriched in basic and acidic residues. Residues Gly-792–Thr-799, Asp-840–Gln-844, and Asn-898–Asp-901 contribute to the GTP site. Residues Cys-971 and Cys-972 are each lipidated (S-geranylgeranyl cysteine).

It belongs to the small GTPase superfamily. Rab family.

The protein localises to the cell membrane. The chain is Ras-related protein Rab-44 (Rab44) from Mus musculus (Mouse).